A 365-amino-acid polypeptide reads, in one-letter code: UDP-N-acetylglucosamine--N-acetylmuramyl-(pentapeptide) pyrophosphoryl-undecaprenol N-acetylglucosamine transferase (365 aa).

UDP-N-acetyl-alpha-D-glucosamine is bound by residues 10–12 (TAG), Asn124, Arg161, Ser195, Ile248, and Gln292.

This sequence belongs to the glycosyltransferase 28 family. MurG subfamily.

Its subcellular location is the cell membrane. The catalysed reaction is di-trans,octa-cis-undecaprenyl diphospho-N-acetyl-alpha-D-muramoyl-L-alanyl-D-glutamyl-meso-2,6-diaminopimeloyl-D-alanyl-D-alanine + UDP-N-acetyl-alpha-D-glucosamine = di-trans,octa-cis-undecaprenyl diphospho-[N-acetyl-alpha-D-glucosaminyl-(1-&gt;4)]-N-acetyl-alpha-D-muramoyl-L-alanyl-D-glutamyl-meso-2,6-diaminopimeloyl-D-alanyl-D-alanine + UDP + H(+). It participates in cell wall biogenesis; peptidoglycan biosynthesis. Cell wall formation. Catalyzes the transfer of a GlcNAc subunit on undecaprenyl-pyrophosphoryl-MurNAc-pentapeptide (lipid intermediate I) to form undecaprenyl-pyrophosphoryl-MurNAc-(pentapeptide)GlcNAc (lipid intermediate II). The protein is UDP-N-acetylglucosamine--N-acetylmuramyl-(pentapeptide) pyrophosphoryl-undecaprenol N-acetylglucosamine transferase of Nocardioides sp. (strain ATCC BAA-499 / JS614).